Consider the following 137-residue polypeptide: Small ribosomal subunit protein uS12 (137 aa).

Disordered stretches follow at residues 1–21 (MPTI…KSDS) and 36–57 (TKLS…TPKK). Residue Asp102 is modified to 3-methylthioaspartic acid.

This sequence belongs to the universal ribosomal protein uS12 family. In terms of assembly, part of the 30S ribosomal subunit. Contacts proteins S8 and S17. May interact with IF1 in the 30S initiation complex.

With S4 and S5 plays an important role in translational accuracy. Functionally, interacts with and stabilizes bases of the 16S rRNA that are involved in tRNA selection in the A site and with the mRNA backbone. Located at the interface of the 30S and 50S subunits, it traverses the body of the 30S subunit contacting proteins on the other side and probably holding the rRNA structure together. The combined cluster of proteins S8, S12 and S17 appears to hold together the shoulder and platform of the 30S subunit. The sequence is that of Small ribosomal subunit protein uS12 from Streptococcus agalactiae serotype Ia (strain ATCC 27591 / A909 / CDC SS700).